We begin with the raw amino-acid sequence, 151 residues long: HTH-type transcriptional regulator FL11 (151 aa).

An HTH asnC-type domain is found at 5-66; sequence LDEIDKKIIK…IIDPEALGYS (62 aa). A DNA-binding region (H-T-H motif) is located at residues 24-43; the sequence is LREISKITGLAESTIHERIR. 98-104 serves as a coordination point for L-arginine; the sequence is ETTGDYD. Residues Asn118, Asp122, and 133-135 contribute to the L-lysine site; that span reads THT. Residues Asp122 and 133 to 135 each bind L-arginine; that span reads THT.

In terms of assembly, homodimer. Binds DNA as a dimer and an octamer. The octamer formed with lysine is stable in solution, but the octamer formed with arginine is unstable without DNA. When crystallized in the absence of DNA, dimers are assembled into helical cylinders with six dimers per turn. In solution, predominantly behaves as a dimer.

Its activity is regulated as follows. In the famine mode, FL11 forms dimers and acts as a repressor, leading to growth arrest. In the feast mode, in the presence of high concentrations of lysine or arginine, four dimers assemble into an octamer and cover the fl11 and lysine biosynthesis promoters. This leads to the inhibition of fl11 expression and lysine biosynthesis, decrease of the FL11 concentration in the cell, derepression of the target genes and activation of the metabolism. In terms of biological role, DNA-binding protein involved in the repression of transcription of a large number of genes, thereby arresting growth, in response to environmental changes. Binding sites are identified in promoters of approximately 200 transcription units, including genes involved in ATP synthesis, transmembrane transport, translation and DNA synthesis. The protein is HTH-type transcriptional regulator FL11 of Pyrococcus horikoshii (strain ATCC 700860 / DSM 12428 / JCM 9974 / NBRC 100139 / OT-3).